We begin with the raw amino-acid sequence, 58 residues long: MYFNYKSVCGSCGFGSCYGCGYGCIHSTHCGCNGYYGCYENKYSVIDDLIFFASKKCH.

Interacts with hair keratins.

Its function is as follows. In the hair cortex, hair keratin intermediate filaments are embedded in an interfilamentous matrix, consisting of hair keratin-associated proteins (KRTAP), which are essential for the formation of a rigid and resistant hair shaft through their extensive disulfide bond cross-linking with abundant cysteine residues of hair keratins. The matrix proteins include the high-sulfur and high-glycine-tyrosine keratins. This is Keratin-associated protein 21-3 (KRTAP21-3) from Homo sapiens (Human).